An 83-amino-acid polypeptide reads, in one-letter code: Normal mucosa of esophagus-specific gene 1 protein (83 aa).

Belongs to the complex I NDUFA4 subunit family. Strongly expressed in vertebrae, brain, intestine and stomach.

The protein localises to the nucleus. This is Normal mucosa of esophagus-specific gene 1 protein (Nmes1) from Mus musculus (Mouse).